The following is a 174-amino-acid chain: MTQPPNRQPVRILGIDPGLRRTGWGVIESEGNRLVFIGCGSVEPPDTLPLAERLLAIHRGLAKVLADFAPDEAAVEQTFVNKDAGATLKLGQARGVAMLAPAMVGLSVAEYAPNLVKKTVVGAGHADKNQIQMMLKILLPKAEPPSADAADALAVAITHAHHRVAAARLKAVGA.

Active-site residues include D16, E76, and D148. Positions 16, 76, and 148 each coordinate Mg(2+).

The protein belongs to the RuvC family. As to quaternary structure, homodimer which binds Holliday junction (HJ) DNA. The HJ becomes 2-fold symmetrical on binding to RuvC with unstacked arms; it has a different conformation from HJ DNA in complex with RuvA. In the full resolvosome a probable DNA-RuvA(4)-RuvB(12)-RuvC(2) complex forms which resolves the HJ. Mg(2+) is required as a cofactor.

It is found in the cytoplasm. The enzyme catalyses Endonucleolytic cleavage at a junction such as a reciprocal single-stranded crossover between two homologous DNA duplexes (Holliday junction).. In terms of biological role, the RuvA-RuvB-RuvC complex processes Holliday junction (HJ) DNA during genetic recombination and DNA repair. Endonuclease that resolves HJ intermediates. Cleaves cruciform DNA by making single-stranded nicks across the HJ at symmetrical positions within the homologous arms, yielding a 5'-phosphate and a 3'-hydroxyl group; requires a central core of homology in the junction. The consensus cleavage sequence is 5'-(A/T)TT(C/G)-3'. Cleavage occurs on the 3'-side of the TT dinucleotide at the point of strand exchange. HJ branch migration catalyzed by RuvA-RuvB allows RuvC to scan DNA until it finds its consensus sequence, where it cleaves and resolves the cruciform DNA. This Rhodopseudomonas palustris (strain BisA53) protein is Crossover junction endodeoxyribonuclease RuvC.